The following is an 83-amino-acid chain: Large ribosomal subunit protein uL24 (83 aa).

The protein belongs to the universal ribosomal protein uL24 family. Part of the 50S ribosomal subunit.

In terms of biological role, one of two assembly initiator proteins, it binds directly to the 5'-end of the 23S rRNA, where it nucleates assembly of the 50S subunit. One of the proteins that surrounds the polypeptide exit tunnel on the outside of the subunit. The sequence is that of Large ribosomal subunit protein uL24 from Symbiobacterium thermophilum (strain DSM 24528 / JCM 14929 / IAM 14863 / T).